The chain runs to 637 residues: Mitochondrial Rho GTPase 1 (637 aa).

Residues 1–613 (MSDGETLADV…LRRVFYLSDS (613 aa)) are Cytoplasmic-facing. Residues 7 to 184 (LADVRIVLIG…FYYAQKAVIY (178 aa)) enclose the Miro 1 domain. GTP-binding positions include 28–35 (SLLEDEWV), 74–78 (ISEMR), and 135–138 (LPSG). EF-hand domains follow at residues 200 to 235 (RAKK…CFGI) and 320 to 355 (EGVQ…CSAP). 10 residues coordinate Ca(2+): D213, D215, D217, Y219, E224, D333, D335, D337, C339, and E344. The 166-residue stretch at 436–601 (RKVFQCLVVG…FEQLAMMAVY (166 aa)) folds into the Miro 2 domain. GTP is bound by residues 445-452 (GAKDAGKT), 482-486 (KVKEE), and 549-552 (TKVE). A helical; Anchor for type IV membrane protein membrane pass occupies residues 614-634 (NLLSKITFGAAIVALAGFLVL). Over 635 to 637 (KNL) the chain is Mitochondrial intermembrane.

It belongs to the mitochondrial Rho GTPase family.

It is found in the mitochondrion outer membrane. Functionally, mitochondrial GTPase involved in mitochondrial trafficking. Probably involved in control of anterograde transport of mitochondria and their subcellular distribution. This is Mitochondrial Rho GTPase 1 from Caenorhabditis briggsae.